The following is a 62-amino-acid chain: Small ribosomal subunit protein uS14 (62 aa).

Positions 25, 28, 41, and 44 each coordinate Zn(2+).

This sequence belongs to the universal ribosomal protein uS14 family. Zinc-binding uS14 subfamily. Part of the 30S ribosomal subunit. Contacts proteins S3 and S10. The cofactor is Zn(2+).

Its function is as follows. Binds 16S rRNA, required for the assembly of 30S particles and may also be responsible for determining the conformation of the 16S rRNA at the A site. The protein is Small ribosomal subunit protein uS14 of Aquifex aeolicus (strain VF5).